The chain runs to 148 residues: RING finger protein 24 (148 aa).

The helical transmembrane segment at 24 to 44 (IYIVVFGTAIFVFILSLLFCC) threads the bilayer. An RING-type zinc finger spans residues 78–119 (CAVCLEDFKPRDELGICPCKHAFHRKCLIKWLEVRKVCPLCN).

In terms of assembly, interacts with TRPC1, TRPC3, TRPC4, TRPC5, TRPC6 and TRPC7.

The protein localises to the golgi apparatus membrane. May play a role in TRPCs intracellular trafficking. This is RING finger protein 24 (RNF24) from Homo sapiens (Human).